The primary structure comprises 527 residues: Amine oxidase [flavin-containing] A (527 aa).

Methionine 1 carries the post-translational modification N-acetylmethionine. Residues 1 to 497 (MESLQKTSDA…PSFWERNLPS (497 aa)) are Cytoplasmic-facing. Serine 383 carries the post-translational modification Phosphoserine. S-8alpha-FAD cysteine is present on cysteine 406. The helical; Anchor for type IV membrane protein transmembrane segment at 498-518 (VSGLLKIVGFSTSITALWFVM) threads the bilayer. Residues 519–527 (YRFRLLSRS) lie on the Mitochondrial intermembrane side of the membrane. An interaction with membrane phospholipid headgroups region spans residues 520 to 522 (RFR).

Belongs to the flavin monoamine oxidase family. In terms of assembly, monomer, homo- or heterodimer (containing two subunits of similar size). Each subunit contains a covalently bound flavin. Enzymatically active as monomer. It depends on FAD as a cofactor.

It localises to the mitochondrion outer membrane. It carries out the reaction a secondary aliphatic amine + O2 + H2O = a primary amine + an aldehyde + H2O2. The enzyme catalyses a primary methyl amine + O2 + H2O = an aldehyde + H2O2 + NH4(+). The catalysed reaction is (R)-adrenaline + O2 + H2O = (R)-3,4-dihydroxymandelaldehyde + methylamine + H2O2. It catalyses the reaction dopamine + O2 + H2O = 3,4-dihydroxyphenylacetaldehyde + H2O2 + NH4(+). It carries out the reaction tyramine + O2 + H2O = (4-hydroxyphenyl)acetaldehyde + H2O2 + NH4(+). The enzyme catalyses (R)-noradrenaline + O2 + H2O = (R)-3,4-dihydroxymandelaldehyde + H2O2 + NH4(+). The catalysed reaction is serotonin + O2 + H2O = (5-hydroxyindol-3-yl)acetaldehyde + H2O2 + NH4(+). It catalyses the reaction kynuramine + O2 + H2O = 3-(2-aminophenyl)-3-oxopropanal + H2O2 + NH4(+). It carries out the reaction tryptamine + O2 + H2O = indole-3-acetaldehyde + H2O2 + NH4(+). The enzyme catalyses 2-phenylethylamine + O2 + H2O = 2-phenylacetaldehyde + H2O2 + NH4(+). Catalyzes the oxidative deamination of primary and some secondary amine such as neurotransmitters, with concomitant reduction of oxygen to hydrogen peroxide and has important functions in the metabolism of neuroactive and vasoactive amines in the central nervous system and peripheral tissues. Preferentially oxidizes serotonin. Also catalyzes the oxidative deamination of kynuramine to 3-(2-aminophenyl)-3-oxopropanal that can spontaneously condense to 4-hydroxyquinoline. This Bos taurus (Bovine) protein is Amine oxidase [flavin-containing] A.